A 345-amino-acid chain; its full sequence is GDP-mannose transporter (345 aa).

Residues 1–8 lie on the Cytoplasmic side of the membrane; the sequence is MDNHMLNR. A helical membrane pass occupies residues 9 to 29; the sequence is ISKSPILPVVSYCMASILMTL. Residues 30–40 lie on the Lumenal side of the membrane; it reads TNKYVLSSPGY. Residues 41 to 61 traverse the membrane as a helical segment; it reads NMNFLLLTVQSTVCVAAIGIL. Over 62–78 the chain is Cytoplasmic; sequence KRLKVINYRDFDFREAK. Residues 79–101 traverse the membrane as a helical segment; the sequence is FWFPISFLLVAMIYTASKALQFL. The Lumenal portion of the chain corresponds to 102-104; sequence SVP. Residues 105–127 form a helical membrane-spanning segment; sequence VYTIFKNLTIIIIAYGEVLWFGG. Residues 128–131 are Cytoplasmic-facing; that stretch reads HVTA. The chain crosses the membrane as a helical span at residues 132-150; sequence LTLFSFGLMVLSSIVAAWA. Topologically, residues 151–161 are lumenal; it reads DIQSSSFASQT. Residues 162–182 traverse the membrane as a helical segment; the sequence is LNSGYLWMVLNCLTNAAFVLA. Residues 183–194 lie on the Cytoplasmic side of the membrane; that stretch reads MRKRIKLTNFRD. Residues 195–215 form a helical membrane-spanning segment; it reads FDTMFYNNLLSIPVLVICTLF. Residues 216 to 233 lie on the Lumenal side of the membrane; that stretch reads TEDWSAENIAQNFPPDAK. The chain crosses the membrane as a helical span at residues 234–254; that stretch reads FGVLMAMAISGVSSVGISYTS. Topologically, residues 255–264 are cytoplasmic; the sequence is AWCVRVTSST. The helical transmembrane segment at 265–285 threads the bilayer; sequence TYSMVGALNKLPLAIAGLVFF. Topologically, residues 286–288 are lumenal; sequence DAP. A helical membrane pass occupies residues 289-309; it reads ITFGSVTAILLGFISGVVYAV. Residues 310 to 345 are Cytoplasmic-facing; that stretch reads AKSQQQRQKDPATILPMTHNPVSASSQSMRDSLSKS. The segment at 319–345 is disordered; that stretch reads DPATILPMTHNPVSASSQSMRDSLSKS. Over residues 329-345 the composition is skewed to polar residues; the sequence is NPVSASSQSMRDSLSKS.

It belongs to the TPT transporter family. SLC35D subfamily. In terms of assembly, homooligomer.

Its subcellular location is the golgi apparatus membrane. The protein resides in the cytoplasmic vesicle membrane. It is found in the endoplasmic reticulum membrane. Its function is as follows. Involved in the import of GDP-mannose from the cytoplasm into the Golgi lumen. This is GDP-mannose transporter (vrg4) from Schizosaccharomyces pombe (strain 972 / ATCC 24843) (Fission yeast).